The chain runs to 245 residues: tRNA pseudouridine synthase A (245 aa).

Asp-52 functions as the Nucleophile in the catalytic mechanism. Tyr-111 contacts substrate.

Belongs to the tRNA pseudouridine synthase TruA family. Homodimer.

It carries out the reaction uridine(38/39/40) in tRNA = pseudouridine(38/39/40) in tRNA. Functionally, formation of pseudouridine at positions 38, 39 and 40 in the anticodon stem and loop of transfer RNAs. The protein is tRNA pseudouridine synthase A of Bradyrhizobium diazoefficiens (strain JCM 10833 / BCRC 13528 / IAM 13628 / NBRC 14792 / USDA 110).